The chain runs to 452 residues: Protein MLF3 (452 aa).

6 positions are modified to phosphoserine: Ser8, Ser11, Ser14, Ser56, Ser74, and Ser79. The disordered stretch occupies residues 61–94; it reads SGSEVRTPSLRKNSNNVSSPLDNVIPTSRSASNS. Polar residues predominate over residues 64-81; it reads EVRTPSLRKNSNNVSSPL. Residue Thr121 is modified to Phosphothreonine. Residues Ser145, Ser156, and Ser160 each carry the phosphoserine modification. The residue at position 169 (Thr169) is a Phosphothreonine. Phosphoserine is present on Ser171. Over residues 171-182 the composition is skewed to polar residues; the sequence is SATLPSSESSPA. The segment at 171–220 is disordered; it reads SATLPSSESSPASPDLKLSRSHSHSAATRPTLNNINNTGMTTTTSNGEPN. Residue Thr173 is modified to Phosphothreonine. 2 positions are modified to phosphoserine: Ser183 and Ser189. Positions 201–216 are enriched in low complexity; it reads TLNNINNTGMTTTTSN. At Tyr227 the chain carries Phosphotyrosine. Phosphoserine occurs at positions 228, 257, and 265. Disordered regions lie at residues 290 to 321 and 348 to 402; these read PATS…NRSS and IESS…AIGK. Residue Tyr295 is modified to Phosphotyrosine. Ser297, Ser320, and Ser353 each carry phosphoserine. The span at 299–321 shows a compositional bias: low complexity; sequence QQSARQYSNNANNNAKSPKNRSS. Over residues 365-383 the composition is skewed to low complexity; it reads PSFPLSSSLRSSANLASNP. Positions 384-398 are enriched in polar residues; it reads ELATQTPLSTSSSYT. Ser439 carries the phosphoserine modification.

This sequence to yeast VHS2.

It localises to the cytoplasm. The sequence is that of Protein MLF3 (MLF3) from Saccharomyces cerevisiae (strain ATCC 204508 / S288c) (Baker's yeast).